We begin with the raw amino-acid sequence, 208 residues long: Protein-methionine-sulfoxide reductase heme-binding subunit MsrQ (208 aa).

6 helical membrane passes run 16–36 (IAVFVACLLPLVWYGARFVGG), 53–73 (WGLIFLLASLAATPARLLWGW), 82–102 (MVGLFAFFYVCLHLLSYIGLD), 118–138 (TYITVGMAALLLLVPLAVTST), 156–176 (LVYPAAVLGVLHYMLMVKADL), and 178–198 (EPLIFAGILGLLLAVRLVPAV).

It belongs to the MsrQ family. In terms of assembly, heterodimer of a catalytic subunit (MsrP) and a heme-binding subunit (MsrQ). FMN serves as cofactor. The cofactor is heme b.

The protein localises to the cell inner membrane. In terms of biological role, part of the MsrPQ system that repairs oxidized periplasmic proteins containing methionine sulfoxide residues (Met-O), using respiratory chain electrons. Thus protects these proteins from oxidative-stress damage caused by reactive species of oxygen and chlorine generated by the host defense mechanisms. MsrPQ is essential for the maintenance of envelope integrity under bleach stress, rescuing a wide series of structurally unrelated periplasmic proteins from methionine oxidation. MsrQ provides electrons for reduction to the reductase catalytic subunit MsrP, using the quinone pool of the respiratory chain. The chain is Protein-methionine-sulfoxide reductase heme-binding subunit MsrQ from Rhodospirillum rubrum (strain ATCC 11170 / ATH 1.1.1 / DSM 467 / LMG 4362 / NCIMB 8255 / S1).